We begin with the raw amino-acid sequence, 338 residues long: Elongation factor Ts, mitochondrial (338 aa).

A mitochondrion-targeting transit peptide spans methionine 1–serine 55. 3 positions are modified to N6-succinyllysine: lysine 89, lysine 146, and lysine 205. Serine 283 is subject to Phosphoserine.

Belongs to the EF-Ts family.

The protein resides in the mitochondrion. Functionally, associates with the EF-Tu.GDP complex and induces the exchange of GDP to GTP. It remains bound to the aminoacyl-tRNA.EF-Tu.GTP complex up to the GTP hydrolysis stage on the ribosome. In Bos taurus (Bovine), this protein is Elongation factor Ts, mitochondrial.